The sequence spans 124 residues: Small ribosomal subunit protein uS13 (124 aa).

The segment at 98-124 (VRGQRTKTNARTRKGPKRTIAGKKKAR) is disordered.

Belongs to the universal ribosomal protein uS13 family. In terms of assembly, part of the 30S ribosomal subunit. Forms a loose heterodimer with protein S19. Forms two bridges to the 50S subunit in the 70S ribosome.

In terms of biological role, located at the top of the head of the 30S subunit, it contacts several helices of the 16S rRNA. In the 70S ribosome it contacts the 23S rRNA (bridge B1a) and protein L5 of the 50S subunit (bridge B1b), connecting the 2 subunits; these bridges are implicated in subunit movement. Contacts the tRNAs in the A and P-sites. This Mycobacterium leprae (strain Br4923) protein is Small ribosomal subunit protein uS13.